The following is a 201-amino-acid chain: Glycerol-3-phosphate acyltransferase (201 aa).

Transmembrane regions (helical) follow at residues M10 to L30, L60 to A80, A86 to F106, L116 to V136, and A166 to I186.

The protein belongs to the PlsY family. Probably interacts with PlsX.

The protein localises to the cell inner membrane. It catalyses the reaction an acyl phosphate + sn-glycerol 3-phosphate = a 1-acyl-sn-glycero-3-phosphate + phosphate. Its pathway is lipid metabolism; phospholipid metabolism. Its function is as follows. Catalyzes the transfer of an acyl group from acyl-phosphate (acyl-PO(4)) to glycerol-3-phosphate (G3P) to form lysophosphatidic acid (LPA). This enzyme utilizes acyl-phosphate as fatty acyl donor, but not acyl-CoA or acyl-ACP. In Brucella abortus (strain 2308), this protein is Glycerol-3-phosphate acyltransferase.